The chain runs to 783 residues: Na(+)/H(+) exchanger protein 7 (783 aa).

The chain crosses the membrane as a helical span at residues 1–18 (MWIKLLFFFTTLLVSTSG). Over 19-108 (LGDDGITALL…WHWDYVKNEL (90 aa)) the chain is Extracellular. A helical membrane pass occupies residues 109–129 (VLTLFFIVIGLFKLVYHHTFV). At 130–132 (TRK) the chain is on the cytoplasmic side. The chain crosses the membrane as a helical span at residues 133–153 (ILPESCCLIFIGIAIGFFFVG). The Extracellular portion of the chain corresponds to 154–159 (DATHAS). The chain crosses the membrane as a helical span at residues 160–180 (IKFLEFKSKVFFFYLLPPIIL). At 181–206 (ESAYSLKDRAFIENIGTILLYAVVGT) the chain is on the cytoplasmic side. A helical membrane pass occupies residues 207–227 (ILNIVLLAAALLILIWVGIMG). Topologically, residues 228–235 (KYNLSVMD) are extracellular. Residues 236 to 256 (ILTFASLVAAVDPVAVLAVFQ) traverse the membrane as a helical segment. Over 257 to 262 (EVGVNK) the chain is Cytoplasmic. Residues 263–283 (MLYFMVFGESLFNDAVTIVCY) form a helical membrane-spanning segment. Residues 284–299 (NLAIEFQTLPDFTWYH) lie on the Extracellular side of the membrane. A helical transmembrane segment spans residues 300–320 (GFLGLLSFLCVSIGGLIIGLI). Residues 321 to 350 (CGAISSFVTKFTTDVRVVEPVVLFGMAYLA) are Cytoplasmic-facing. A helical transmembrane segment spans residues 351-371 (YLGSEMFHFSGIIALIACGLF). Over 372–390 (QTHYACCNISYKSFTSVMY) the chain is Extracellular. A glycan (N-linked (GlcNAc...) asparagine) is linked at Asn379. An intramembrane region (helical) is located at residues 391–411 (ITKVCSTLCESLIFIILGVML). The Extracellular segment spans residues 412–424 (VNEREWFWTDWHP). A helical membrane pass occupies residues 425 to 445 (VFSAVSVVLCVVVRFGVTFFL). The Cytoplasmic segment spans residues 446–464 (TYFVNQFTGGVRHISFQEQ). The chain crosses the membrane as a helical span at residues 465–485 (FIMSYGGLRGAVSFSLVFMIS). The Extracellular segment spans residues 486-492 (ANPDVKN). Residues 493–513 (TMLGATYAVILFTNIIQGSTI) form a helical membrane-spanning segment. The Cytoplasmic segment spans residues 514 to 783 (KLFVKWLNIR…TITESEETSF (270 aa)). Positions 649-702 (DNEDADQRANELIKDVSSIRQLMHNPFEDCYLDRNLTHEEEKEQARLKMKKTRA) form a coiled coil. Residues 745 to 783 (RPSTSTRVSVEDEEQGLTMKEMEEEHPLMTITESEETSF) are disordered.

The protein belongs to the monovalent cation:proton antiporter 1 (CPA1) transporter (TC 2.A.36) family. In terms of assembly, interacts (via C-terminus) with cmd-1. As to expression, detected in the posterior cells of the intestine.

The protein resides in the basolateral cell membrane. Functionally, na+/H+ exchanger which mediates the transient acidification of the coelomic space and plays a role in contraction of posterior body muscles during defecation. Probably by regulating the defecation motor program, required for fatty acid uptake by intestinal cells. The polypeptide is Na(+)/H(+) exchanger protein 7 (Caenorhabditis elegans).